The primary structure comprises 299 residues: 33 kDa chaperonin (299 aa).

2 cysteine pairs are disulfide-bonded: Cys234/Cys236 and Cys268/Cys271.

Belongs to the HSP33 family. Under oxidizing conditions two disulfide bonds are formed involving the reactive cysteines. Under reducing conditions zinc is bound to the reactive cysteines and the protein is inactive.

It is found in the cytoplasm. Functionally, redox regulated molecular chaperone. Protects both thermally unfolding and oxidatively damaged proteins from irreversible aggregation. Plays an important role in the bacterial defense system toward oxidative stress. The sequence is that of 33 kDa chaperonin from Pseudomonas putida (strain ATCC 700007 / DSM 6899 / JCM 31910 / BCRC 17059 / LMG 24140 / F1).